Reading from the N-terminus, the 172-residue chain is Iron-sulfur cluster assembly protein SufA (172 aa).

The first 19 residues, 1 to 19, serve as a signal peptide directing secretion; the sequence is MFINIFLFLFAATINISSS. Residues cysteine 96, cysteine 164, and cysteine 166 each contribute to the [4Fe-4S] cluster site.

This sequence belongs to the HesB/IscA family. Homodimer.

It is found in the plastid. The protein resides in the apicoplast. Its pathway is cofactor biosynthesis; iron-sulfur cluster biosynthesis. In terms of biological role, participates in the sulfur mobilization (SUF) pathway for iron-sulfur (Fe-S) cluster biogenesis. Involved in the pre-assembly of [4Fe-4S] clusters and their transfer to target proteins. The protein is Iron-sulfur cluster assembly protein SufA of Plasmodium berghei (strain Anka).